Consider the following 63-residue polypeptide: Large ribosomal subunit protein bL35 (63 aa).

The protein belongs to the bacterial ribosomal protein bL35 family.

The chain is Large ribosomal subunit protein bL35 from Campylobacter jejuni (strain RM1221).